Consider the following 345-residue polypeptide: Putative RING-H2 finger protein ATL36 (345 aa).

A signal peptide spans 1-31 (MNIFTRYHLPRVVSGVILPLFLFHLLPYVTC). A helical membrane pass occupies residues 50–70 (SIIAIVVLAIFISLGMVSCCL). The RING-type; atypical zinc finger occupies 123-165 (CAICLSEFEDQETLRWMPPCSHTFHANCIDVWLSSWSTCPVCR). Position 264 is a phosphoserine (S264).

It belongs to the RING-type zinc finger family. ATL subfamily.

It is found in the membrane. It carries out the reaction S-ubiquitinyl-[E2 ubiquitin-conjugating enzyme]-L-cysteine + [acceptor protein]-L-lysine = [E2 ubiquitin-conjugating enzyme]-L-cysteine + N(6)-ubiquitinyl-[acceptor protein]-L-lysine.. Its pathway is protein modification; protein ubiquitination. The chain is Putative RING-H2 finger protein ATL36 (ATL36) from Arabidopsis thaliana (Mouse-ear cress).